Here is a 472-residue protein sequence, read N- to C-terminus: Excisase A (472 aa).

A Tyr recombinase domain is found at 244-429; it reads EILSGITKFE…FSLDMRKLAI (186 aa). Catalysis depends on residues Arg287, Lys317, Arg384, and His407. Tyr416 acts as the O-(3'-phospho-DNA)-tyrosine intermediate in catalysis.

It belongs to the XisA/XisC recombinase family.

Functionally, essential for DNA excision. Site specific recombinase necessary for the excision of the 11 kb nifD element during heterocyst differentiation. This is Excisase A (xisA) from Nostoc sp. (strain PCC 7120 / SAG 25.82 / UTEX 2576).